The chain runs to 382 residues: 4-hydroxy-3-methylbut-2-en-1-yl diphosphate synthase (flavodoxin) (382 aa).

Positions 290, 293, 327, and 334 each coordinate [4Fe-4S] cluster.

This sequence belongs to the IspG family. [4Fe-4S] cluster is required as a cofactor.

It carries out the reaction (2E)-4-hydroxy-3-methylbut-2-enyl diphosphate + oxidized [flavodoxin] + H2O + 2 H(+) = 2-C-methyl-D-erythritol 2,4-cyclic diphosphate + reduced [flavodoxin]. It participates in isoprenoid biosynthesis; isopentenyl diphosphate biosynthesis via DXP pathway; isopentenyl diphosphate from 1-deoxy-D-xylulose 5-phosphate: step 5/6. Functionally, converts 2C-methyl-D-erythritol 2,4-cyclodiphosphate (ME-2,4cPP) into 1-hydroxy-2-methyl-2-(E)-butenyl 4-diphosphate. The polypeptide is 4-hydroxy-3-methylbut-2-en-1-yl diphosphate synthase (flavodoxin) (Rhodopirellula baltica (strain DSM 10527 / NCIMB 13988 / SH1)).